The chain runs to 141 residues: Nucleoside diphosphate kinase (141 aa).

K11, F59, R87, T93, R104, and N114 together coordinate ATP. Catalysis depends on H117, which acts as the Pros-phosphohistidine intermediate.

Belongs to the NDK family. Homotetramer. Mg(2+) serves as cofactor.

The protein localises to the cytoplasm. It catalyses the reaction a 2'-deoxyribonucleoside 5'-diphosphate + ATP = a 2'-deoxyribonucleoside 5'-triphosphate + ADP. It carries out the reaction a ribonucleoside 5'-diphosphate + ATP = a ribonucleoside 5'-triphosphate + ADP. Its function is as follows. Major role in the synthesis of nucleoside triphosphates other than ATP. The ATP gamma phosphate is transferred to the NDP beta phosphate via a ping-pong mechanism, using a phosphorylated active-site intermediate. This is Nucleoside diphosphate kinase from Nitrosomonas eutropha (strain DSM 101675 / C91 / Nm57).